A 1203-amino-acid chain; its full sequence is DNA-directed RNA polymerase subunit beta (1203 aa).

Over residues 1174-1195 (AAQEAKAAFEAEEAEKATKAEA) the composition is skewed to basic and acidic residues. Residues 1174-1203 (AAQEAKAAFEAEEAEKATKAEATEEAAEQE) are disordered.

It belongs to the RNA polymerase beta chain family. The RNAP catalytic core consists of 2 alpha, 1 beta, 1 beta' and 1 omega subunit. When a sigma factor is associated with the core the holoenzyme is formed, which can initiate transcription.

The catalysed reaction is RNA(n) + a ribonucleoside 5'-triphosphate = RNA(n+1) + diphosphate. Functionally, DNA-dependent RNA polymerase catalyzes the transcription of DNA into RNA using the four ribonucleoside triphosphates as substrates. The sequence is that of DNA-directed RNA polymerase subunit beta from Streptococcus pneumoniae serotype 19F (strain G54).